We begin with the raw amino-acid sequence, 80 residues long: Pancreatic polypeptide (80 aa).

The N-terminal stretch at 1–25 is a signal peptide; it reads MPPRWASLLLLACSLLLLAVPPGTA. Tyr61 carries the tyrosine amide modification. Positions 65 to 80 are excised as a propeptide; that stretch reads SSSRVLCEEPMGAAGC.

It belongs to the NPY family.

The protein localises to the secreted. Hormone secreted by pancreatic cells that acts as a regulator of pancreatic and gastrointestinal functions. The polypeptide is Pancreatic polypeptide (PPY) (Gallus gallus (Chicken)).